The chain runs to 283 residues: Bifunctional protein FolD 2 (283 aa).

NADP(+) is bound by residues 165–167, Ser190, and Ile231; that span reads GAS.

It belongs to the tetrahydrofolate dehydrogenase/cyclohydrolase family. As to quaternary structure, homodimer.

It catalyses the reaction (6R)-5,10-methylene-5,6,7,8-tetrahydrofolate + NADP(+) = (6R)-5,10-methenyltetrahydrofolate + NADPH. The enzyme catalyses (6R)-5,10-methenyltetrahydrofolate + H2O = (6R)-10-formyltetrahydrofolate + H(+). Its pathway is one-carbon metabolism; tetrahydrofolate interconversion. Catalyzes the oxidation of 5,10-methylenetetrahydrofolate to 5,10-methenyltetrahydrofolate and then the hydrolysis of 5,10-methenyltetrahydrofolate to 10-formyltetrahydrofolate. The protein is Bifunctional protein FolD 2 of Bordetella pertussis (strain Tohama I / ATCC BAA-589 / NCTC 13251).